Here is a 278-residue protein sequence, read N- to C-terminus: Probable endonuclease 4 (278 aa).

His-66, His-106, Glu-142, Asp-176, His-179, His-213, Asp-226, His-228, and Glu-258 together coordinate Zn(2+).

This sequence belongs to the AP endonuclease 2 family. Zn(2+) is required as a cofactor.

It carries out the reaction Endonucleolytic cleavage to 5'-phosphooligonucleotide end-products.. Functionally, endonuclease IV plays a role in DNA repair. It cleaves phosphodiester bonds at apurinic or apyrimidinic (AP) sites, generating a 3'-hydroxyl group and a 5'-terminal sugar phosphate. The chain is Probable endonuclease 4 from Halothermothrix orenii (strain H 168 / OCM 544 / DSM 9562).